A 248-amino-acid chain; its full sequence is Triosephosphate isomerase (248 aa).

The substrate site is built by Asn11 and Lys13. Residue His95 is the Electrophile of the active site. The active-site Proton acceptor is the Glu165.

This sequence belongs to the triosephosphate isomerase family. As to quaternary structure, homodimer.

It localises to the cytoplasm. It catalyses the reaction dihydroxyacetone phosphate = methylglyoxal + phosphate. It carries out the reaction D-glyceraldehyde 3-phosphate = dihydroxyacetone phosphate. It functions in the pathway carbohydrate degradation; glycolysis; D-glyceraldehyde 3-phosphate from glycerone phosphate: step 1/1. Its pathway is carbohydrate biosynthesis; gluconeogenesis. Triosephosphate isomerase is an extremely efficient metabolic enzyme that catalyzes the interconversion between dihydroxyacetone phosphate (DHAP) and D-glyceraldehyde-3-phosphate (G3P) in glycolysis and gluconeogenesis. Functionally, it is also responsible for the non-negligible production of methylglyoxal a reactive cytotoxic side-product that modifies and can alter proteins, DNA and lipids. The protein is Triosephosphate isomerase (TPI1) of Gallus gallus (Chicken).